The chain runs to 228 residues: 2,3-bisphosphoglycerate-dependent phosphoglycerate mutase (228 aa).

Residues 8–15 (RHGQSAWN), 21–22 (TG), R60, 87–90 (ERHY), K98, 114–115 (RR), and 180–181 (GN) contribute to the substrate site. H9 acts as the Tele-phosphohistidine intermediate in catalysis. Catalysis depends on E87, which acts as the Proton donor/acceptor.

Belongs to the phosphoglycerate mutase family. BPG-dependent PGAM subfamily. As to quaternary structure, homodimer.

It catalyses the reaction (2R)-2-phosphoglycerate = (2R)-3-phosphoglycerate. It functions in the pathway carbohydrate degradation; glycolysis; pyruvate from D-glyceraldehyde 3-phosphate: step 3/5. In terms of biological role, catalyzes the interconversion of 2-phosphoglycerate and 3-phosphoglycerate. The protein is 2,3-bisphosphoglycerate-dependent phosphoglycerate mutase of Rhizorhabdus wittichii (strain DSM 6014 / CCUG 31198 / JCM 15750 / NBRC 105917 / EY 4224 / RW1) (Sphingomonas wittichii).